Reading from the N-terminus, the 365-residue chain is Peptidylglycine alpha-hydroxylating monooxygenase (365 aa).

Residues 1 to 24 (MPRISEIAASVGLLLLIGVISVDG) form the signal peptide. Cystine bridges form between Cys-69–Cys-114 and Cys-102–Cys-129. N-linked (GlcNAc...) asparagine glycosylation occurs at Asn-88. 2 residues coordinate Cu cation: His-95 and His-96. Cu cation-binding residues include His-172, His-241, and His-243. A glycan (N-linked (GlcNAc...) asparagine) is linked at Asn-280. A disulfide bond links Cys-297 and Cys-318. Residue Met-317 participates in Cu cation binding.

It belongs to the copper type II ascorbate-dependent monooxygenase family. It depends on Cu(2+) as a cofactor. As to expression, expressed in the central nervous system (CNS) in a small number of CNS neurons (approximately a few hundred). Expression is present both in cell bodies and within neuropil regions. It is strongly expressed in neuroendocrine neurons (at protein level).

Its subcellular location is the secreted. It carries out the reaction a [peptide]-C-terminal glycine + 2 L-ascorbate + O2 = a [peptide]-C-terminal (2S)-2-hydroxyglycine + 2 monodehydro-L-ascorbate radical + H2O. Monooxygenase that catalyzes an essential reaction in C-terminal alpha-amidation of peptides. Produces an unstable peptidyl(2-hydroxyglycine) intermediate. C-terminal amidation of peptides is required for normal developmental transitions and for biosynthesis of secretory peptides throughout the life. The polypeptide is Peptidylglycine alpha-hydroxylating monooxygenase (Phm) (Drosophila melanogaster (Fruit fly)).